Consider the following 362-residue polypeptide: MGAMVPRTLLLLLAAALAPAQTRAGPHSLRYFETVVSRPGLGEPRFISVGYVDNTEFVRFDSDAENPRDEPRVRWMEQEGPEYWERETQIAKGNEQSFRVDLRTLLRYYNQSEGGSHTIQRLSGCDVGSDWRLLRGYEQFAYDGCDYIALNEDLKTWTAADMAALITKHKWEQAGAAERDRAYLEGTCVEWLRRYLELGNATLLHTDSPKAHVTHHPRSKVEVTLRCWALGFYPADITLTWQLNGEELTQDMELVETRPAGDGTFQKWASVVVPLGKEQNYTCHVYHEGLPEPLTLRWEPPPSTDSYMVIVAVLGVLGAVAIIGAVVAFVMMMRRNTGGKGGDYTLTPGSQSSEMSLPDCKA.

Residues 1-24 form the signal peptide; that stretch reads MGAMVPRTLLLLLAAALAPAQTRA. An alpha-1 region spans residues 25–114; the sequence is GPHSLRYFET…LLRYYNQSEG (90 aa). Residues 25 to 306 lie on the Extracellular side of the membrane; it reads GPHSLRYFET…RWEPPPSTDS (282 aa). A glycan (N-linked (GlcNAc...) asparagine) is linked at Asn110. Residues 115–206 form an alpha-2 region; it reads GSHTIQRLSG…ELGNATLLHT (92 aa). The cysteines at positions 125 and 188 are disulfide-linked. 2 N-linked (GlcNAc...) asparagine glycosylation sites follow: Asn200 and Asn280. The segment at 207–298 is alpha-3; the sequence is DSPKAHVTHH…GLPEPLTLRW (92 aa). The Ig-like C1-type domain maps to 209–297; that stretch reads PKAHVTHHPR…EGLPEPLTLR (89 aa). A disulfide bridge links Cys227 with Cys283. Positions 299 to 306 are connecting peptide; that stretch reads EPPPSTDS. The chain crosses the membrane as a helical span at residues 307–333; it reads YMVIVAVLGVLGAVAIIGAVVAFVMMM. Topologically, residues 334 to 362 are cytoplasmic; the sequence is RRNTGGKGGDYTLTPGSQSSEMSLPDCKA. A disordered region spans residues 340–362; the sequence is KGGDYTLTPGSQSSEMSLPDCKA. Phosphoserine occurs at positions 353 and 356.

It belongs to the MHC class I family. Heterodimer of an alpha chain and a beta chain (beta-2-microglobulin). Post-translationally, polyubiquitinated in case of infection by murid herpesvirus 4, by the viral E3 ligase K3 (mK3), leading to target the protein for rapid degradation by the endoplasmic reticulum-associated degradation (ERAD) system. Ubiquitination takes place on lysine, as well as serine and threonine residues present in the cytoplasmic tail. Hydroxylated serine and threonine residues in the cytoplasmic tail are subject to ubiquitination via ester bonds instead of the classical isopeptide linkage. In terms of processing, hydroxylation of residues in the cytoplasmic tail.

It localises to the membrane. Its function is as follows. Involved in the presentation of foreign antigens to the immune system. This chain is H-2 class I histocompatibility antigen, D-K alpha chain (H2-D1), found in Mus musculus (Mouse).